The following is a 526-amino-acid chain: MSGNKVEVDKRRTFAIISHPDAGKTTITEKVLLFGNALQKAGTVKGKKSGQHAKSDWMEMEKDRGISITTSVMQFPYNGALVNLLDTPGHEDFSEDTYRTLTAVDSCLMVIDSAKGVEQRTIKLMEVTRLRDTPIVTFMNKLDRDIRDPLELMDEVEKVLNIACAPITWPIGCGKEFKGVYHLLRDEVILYQSGQGHTIQDSTIIKGLDNPELDAAIGTYAAEVREELELVLGASNEFDLELFLAGELTPVYFGTALGNFGVDHILDGIVEWAPKPQARETEVREVQPEDEKFSGFVFKIQANMDPKHRDRVAFMRVCSGRYEQGMKMHHVRLGKDVNVSDALTFMAGDRNRAEVAYPGDIIGLHNHGTMRIGDTFTQGEKLRFTGIPNFAPEMFRRIRLKDPLKQKQLLKGLVQLSEEGAVQVFRPIDTNDLIVGAVGILQFEVVVGRLKSEYKVEAIYEAISVSTARWVYCDDERKLEEFRRKCSTNLALDGGDNLTYIAPTMVNLNLSMERYPDIKFAKTREN.

One can recognise a tr-type G domain in the interval 9–277 (DKRRTFAIIS…GIVEWAPKPQ (269 aa)). Residues 18–25 (SHPDAGKT), 86–90 (DTPGH), and 140–143 (NKLD) each bind GTP.

Belongs to the TRAFAC class translation factor GTPase superfamily. Classic translation factor GTPase family. PrfC subfamily.

Its subcellular location is the cytoplasm. Functionally, increases the formation of ribosomal termination complexes and stimulates activities of RF-1 and RF-2. It binds guanine nucleotides and has strong preference for UGA stop codons. It may interact directly with the ribosome. The stimulation of RF-1 and RF-2 is significantly reduced by GTP and GDP, but not by GMP. The sequence is that of Peptide chain release factor 3 from Shewanella sediminis (strain HAW-EB3).